The following is a 407-amino-acid chain: Nuclear hormone receptor family member nhr-86 (407 aa).

The segment at residues Lys-21 to Gln-96 is a DNA-binding region (nuclear receptor). NR C4-type zinc fingers lie at residues Cys-24–Cys-44 and Cys-60–Cys-79. Residues Ala-130–Lys-405 form the NR LBD domain. Residues Pro-394 to Lys-405 are AF-2.

This sequence belongs to the nuclear hormone receptor family. As to expression, expressed in intestinal epithelial cells, excretory gland cells and in several head neurons.

It is found in the nucleus. In terms of biological role, nuclear receptor which acts as a transcription activator. Binds small molecule ligands, such as phenazine 1-carboxamide (PCN), a pathogen-derived metabolite, leading to modulation of innate immune responses against virulent pathogens. On exposure to exogenous PCN, P.aeruginosa and other xenobiotic immunostimulant such as R24, activates immune response genes, including irg-4, irg-5, mul-1, drd-50, cyp-35C1 and ugt-30, probably via direct interaction with their promoters, and independent of the p38 MAPK pmk-1 pathway. Exhibits higher affinity to R24 than PCN and thus induces stronger immune response. Binds its own promoter thereby autoregulating its expression in the head hypodermis and the pharynx. Possibly plays a role in lipid storage or catabolism. In Caenorhabditis elegans, this protein is Nuclear hormone receptor family member nhr-86 (nhr-86).